The sequence spans 606 residues: Peptide-N(4)-(N-acetyl-beta-glucosaminyl)asparagine amidase (606 aa).

The region spanning 2-108 (PVTEVGSLPE…IAEKIRQHYS (107 aa)) is the Thioredoxin domain. Residues C191, C194, C225, and C228 each contribute to the Zn(2+) site. C251 functions as the Nucleophile in the catalytic mechanism. Active-site residues include H278 and D295. The PAW domain maps to 404–606 (DLGGRITGSE…SFSVKIWMKN (203 aa)).

This sequence belongs to the transglutaminase-like superfamily. PNGase family. Zn(2+) is required as a cofactor.

It localises to the cytoplasm. The protein localises to the endoplasmic reticulum. The catalysed reaction is Hydrolysis of an N(4)-(acetyl-beta-D-glucosaminyl)asparagine residue in which the glucosamine residue may be further glycosylated, to yield a (substituted) N-acetyl-beta-D-glucosaminylamine and a peptide containing an aspartate residue.. Inhibited by Zn(2+) and z-VAD-fmk (caspase inhibitor) but unaffected by EDTA. Its function is as follows. Specifically deglycosylates the denatured form of N-linked glycoproteins in the cytoplasm and assists their proteasome-mediated degradation. Cleaves the beta-aspartyl-glucosamine (GlcNAc) of the glycan and the amide side chain of Asn, converting Asn to Asp. Prefers proteins containing high-mannose over those bearing complex type oligosaccharides. Can recognize misfolded proteins in the endoplasmic reticulum that are exported to the cytosol to be destroyed and deglycosylate them, while it has no activity toward native proteins. Deglycosylation is a prerequisite for subsequent proteasome-mediated degradation of some, but not all, misfolded glycoproteins. Also displays oxidoreductase (thioredoxin) activity. Involved in regulating the expression of proteasomal subunits such as rpt-3 in order to confer resistance to proteasomal dysfunction. The sequence is that of Peptide-N(4)-(N-acetyl-beta-glucosaminyl)asparagine amidase (png-1) from Caenorhabditis elegans.